We begin with the raw amino-acid sequence, 142 residues long: Universal stress protein D (142 aa).

The protein belongs to the universal stress protein A family.

It localises to the cytoplasm. Functionally, required for resistance to DNA-damaging agents. The protein is Universal stress protein D (uspD) of Escherichia coli O157:H7.